The sequence spans 343 residues: Mas-related G-protein coupled receptor member F (343 aa).

Residues 1-44 are Extracellular-facing; it reads MAGNCSWEAHSTNQNKMCPGMSEARELYSRGFLTIEQIATLPPP. An N-linked (GlcNAc...) asparagine glycan is attached at Asn-4. The chain crosses the membrane as a helical span at residues 45–66; that stretch reads AVTNYIFLLLCLCGLVGNGLVL. At 67 to 82 the chain is on the cytoplasmic side; it reads WFFGFSIKRTPFSIYF. A helical transmembrane segment spans residues 83–104; the sequence is LHLASADGMYLFSKAVIALLNM. Residues 105–123 lie on the Extracellular side of the membrane; it reads GTFLGSFPDYIRRVSRIVG. The helical transmembrane segment at 124–144 threads the bilayer; sequence LCTFFTGVSLLPAISIERCVS. The Cytoplasmic segment spans residues 145 to 160; it reads VIFPTWYWRRRPKRLS. The helical transmembrane segment at 161-181 threads the bilayer; sequence AGVCALLWMLSFLVTSIHNYF. At 182–198 the chain is on the extracellular side; it reads CMFLGHEAPGTVCRNMD. The helical transmembrane segment at 199–220 threads the bilayer; sequence IALGILLFFLFCPLMVLPCLAL. At 221-241 the chain is on the cytoplasmic side; the sequence is ILHVECRARRRQRSAKLNHVV. The chain crosses the membrane as a helical span at residues 242–263; sequence LAIVSVFLVSSIYLGIDWFLFW. Residues 264–273 are Extracellular-facing; the sequence is VFQIPAPFPE. Residues 274–294 form a helical membrane-spanning segment; it reads YVTDLCICINSSAKPIVYFLA. Over 295–343 the chain is Cytoplasmic; the sequence is GRDKSQRLWEPLRVVFQRALRDGAEPGDAASSTPNTVTMEMQCPSGNAS. Residues 318–343 are disordered; the sequence is AEPGDAASSTPNTVTMEMQCPSGNAS. The span at 324-343 shows a compositional bias: polar residues; the sequence is ASSTPNTVTMEMQCPSGNAS.

The protein belongs to the G-protein coupled receptor 1 family. Mas subfamily.

It localises to the cell membrane. Orphan receptor. May bind to a neuropeptide and may regulate nociceptor function and/or development, including the sensation or modulation of pain. In Mus musculus (Mouse), this protein is Mas-related G-protein coupled receptor member F (Mrgprf).